A 275-amino-acid chain; its full sequence is NH(3)-dependent NAD(+) synthetase (275 aa).

Residue 46 to 53 (GISGGQDS) participates in ATP binding. D52 provides a ligand contact to Mg(2+). R140 lines the deamido-NAD(+) pocket. An ATP-binding site is contributed by T160. E165 lines the Mg(2+) pocket. The deamido-NAD(+) site is built by K173 and D180. ATP is bound by residues K189 and T211. 260 to 261 (HK) serves as a coordination point for deamido-NAD(+).

It belongs to the NAD synthetase family. As to quaternary structure, homodimer.

It carries out the reaction deamido-NAD(+) + NH4(+) + ATP = AMP + diphosphate + NAD(+) + H(+). It functions in the pathway cofactor biosynthesis; NAD(+) biosynthesis; NAD(+) from deamido-NAD(+) (ammonia route): step 1/1. In terms of biological role, catalyzes the ATP-dependent amidation of deamido-NAD to form NAD. Uses ammonia as a nitrogen source. The polypeptide is NH(3)-dependent NAD(+) synthetase (Escherichia coli O127:H6 (strain E2348/69 / EPEC)).